Consider the following 465-residue polypeptide: uncharacterized protein (465 aa).

The 50-residue stretch at 1-50 folds into the TRAM domain; it reads MEITDLAAEGNALCRIDDMVMFVPFAAPGDRCTVQVVKKKRNFMQGRIVS. Residues C63, C69, C72, and C168 each contribute to the [4Fe-4S] cluster site. Residues Q293, Y322, E343, and D392 each coordinate S-adenosyl-L-methionine. C419 functions as the Nucleophile in the catalytic mechanism.

Belongs to the class I-like SAM-binding methyltransferase superfamily. RNA M5U methyltransferase family.

This is an uncharacterized protein from Porphyromonas gingivalis (strain ATCC BAA-308 / W83).